We begin with the raw amino-acid sequence, 608 residues long: Microtubule-associated protein VP7 (608 aa).

It is found in the virion. The protein resides in the host cytoplasm. It localises to the host cytoskeleton. Functionally, minor inner capsid component. Displays NTPase and RNA 5'-triphosphatase (RTPase) activities. May function as a cofactor of polymerase. Associates with microtubules and plays a role in the formation, structural organization and morphology of viral inclusions, where the assembly of cores and the replication of viral RNA occur. This chain is Microtubule-associated protein VP7, found in Oryza latifolia (Indian wild rice).